The primary structure comprises 931 residues: DNA mismatch repair protein MutS (931 aa).

Residues methionine 1–arginine 10 show a composition bias toward low complexity. A disordered region spans residues methionine 1 to lysine 34. Residue glycine 674–serine 681 participates in ATP binding.

This sequence belongs to the DNA mismatch repair MutS family.

Functionally, this protein is involved in the repair of mismatches in DNA. It is possible that it carries out the mismatch recognition step. This protein has a weak ATPase activity. In Azorhizobium caulinodans (strain ATCC 43989 / DSM 5975 / JCM 20966 / LMG 6465 / NBRC 14845 / NCIMB 13405 / ORS 571), this protein is DNA mismatch repair protein MutS.